The primary structure comprises 295 residues: Putative clathrin assembly protein At5g65370 (295 aa).

The ENTH domain occupies 26–169 (CSSVNAKTID…SIAEVLGITP (144 aa)).

Its subcellular location is the membrane. The protein localises to the clathrin-coated pit. It is found in the golgi apparatus. The protein resides in the cytoplasmic vesicle. It localises to the clathrin-coated vesicle. In Arabidopsis thaliana (Mouse-ear cress), this protein is Putative clathrin assembly protein At5g65370.